The chain runs to 131 residues: Small ribosomal subunit protein uS11 (131 aa).

This sequence belongs to the universal ribosomal protein uS11 family. In terms of assembly, part of the 30S ribosomal subunit. Interacts with proteins S7 and S18. Binds to IF-3.

Its function is as follows. Located on the platform of the 30S subunit, it bridges several disparate RNA helices of the 16S rRNA. Forms part of the Shine-Dalgarno cleft in the 70S ribosome. This chain is Small ribosomal subunit protein uS11, found in Trichormus variabilis (strain ATCC 29413 / PCC 7937) (Anabaena variabilis).